The chain runs to 346 residues: dTDP-glucose 4,6-dehydratase (346 aa).

Residues 17 to 18 (FI), 38 to 41 (DKLT), 64 to 65 (DI), 86 to 90 (LAAES), and T105 contribute to the NAD(+) site. Residue S90 coordinates substrate. A substrate-binding site is contributed by T139. D140 serves as the catalytic Proton donor. Active-site proton acceptor residues include E141 and Y165. 165–169 (YSASK) provides a ligand contact to NAD(+). Residue N194 participates in substrate binding. N195 provides a ligand contact to NAD(+). Residues 204–205 (KL), 220–222 (PVY), R229, N264, and 298–302 (DRPGH) contribute to the substrate site.

This sequence belongs to the NAD(P)-dependent epimerase/dehydratase family. dTDP-glucose dehydratase subfamily. Homodimer. Requires NAD(+) as cofactor.

It catalyses the reaction dTDP-alpha-D-glucose = dTDP-4-dehydro-6-deoxy-alpha-D-glucose + H2O. The protein operates within carbohydrate biosynthesis; dTDP-L-rhamnose biosynthesis. It participates in bacterial outer membrane biogenesis; LPS O-antigen biosynthesis. Its function is as follows. Catalyzes the dehydration of dTDP-D-glucose to form dTDP-6-deoxy-D-xylo-4-hexulose via a three-step process involving oxidation, dehydration and reduction. This is dTDP-glucose 4,6-dehydratase from Neisseria gonorrhoeae.